The chain runs to 189 residues: Elongation factor P (189 aa).

Lys34 carries the post-translational modification N6-(3,6-diaminohexanoyl)-5-hydroxylysine.

It belongs to the elongation factor P family. May be beta-lysylated on the epsilon-amino group of Lys-34 by the combined action of EpmA and EpmB, and then hydroxylated on the C5 position of the same residue by EpmC (if this protein is present). Lysylation is critical for the stimulatory effect of EF-P on peptide-bond formation. The lysylation moiety may extend toward the peptidyltransferase center and stabilize the terminal 3-CCA end of the tRNA. Hydroxylation of the C5 position on Lys-34 may allow additional potential stabilizing hydrogen-bond interactions with the P-tRNA.

It localises to the cytoplasm. It functions in the pathway protein biosynthesis; polypeptide chain elongation. Involved in peptide bond synthesis. Alleviates ribosome stalling that occurs when 3 or more consecutive Pro residues or the sequence PPG is present in a protein, possibly by augmenting the peptidyl transferase activity of the ribosome. Modification of Lys-34 is required for alleviation. The polypeptide is Elongation factor P (Alcanivorax borkumensis (strain ATCC 700651 / DSM 11573 / NCIMB 13689 / SK2)).